We begin with the raw amino-acid sequence, 435 residues long: Adenylosuccinate synthetase (435 aa).

Residues 17-23 (GDEGKGK) and 45-47 (GHT) contribute to the GTP site. Asp18 functions as the Proton acceptor in the catalytic mechanism. Mg(2+) contacts are provided by Asp18 and Gly45. IMP contacts are provided by residues 18–21 (DEGK), 43–46 (NAGH), Thr135, Arg149, Gln230, Thr245, and Arg309. His46 acts as the Proton donor in catalysis. 305-311 (TVSGRAR) serves as a coordination point for substrate. GTP contacts are provided by residues Arg311, 337–339 (LLD), and 419–421 (SVG).

Belongs to the adenylosuccinate synthetase family. In terms of assembly, homodimer. It depends on Mg(2+) as a cofactor.

It localises to the cytoplasm. The catalysed reaction is IMP + L-aspartate + GTP = N(6)-(1,2-dicarboxyethyl)-AMP + GDP + phosphate + 2 H(+). It participates in purine metabolism; AMP biosynthesis via de novo pathway; AMP from IMP: step 1/2. In terms of biological role, plays an important role in the de novo pathway of purine nucleotide biosynthesis. Catalyzes the first committed step in the biosynthesis of AMP from IMP. This is Adenylosuccinate synthetase from Spiroplasma citri.